A 99-amino-acid chain; its full sequence is Cytochrome c oxidase subunit 4 isoform 1, mitochondrial (99 aa).

At 1–73 the chain is on the mitochondrial matrix side; sequence SVVKSEDFTL…SFAEMNRRSN (73 aa). At Lys-4 the chain carries N6-acetyllysine; alternate. Lys-4 carries the N6-succinyllysine; alternate modification. Lys-28 bears the N6-acetyllysine mark. Phosphoserine occurs at positions 31 and 33. Residue Lys-35 is modified to N6-acetyllysine; alternate. Lys-35 bears the N6-succinyllysine; alternate mark. An N6-acetyllysine modification is found at Lys-42. The chain crosses the membrane as a helical span at residues 74 to 99; sequence EWKTVVGTAMFFIGITALVIMWEKLY.

This sequence belongs to the cytochrome c oxidase IV family. In terms of assembly, component of the cytochrome c oxidase (complex IV, CIV), a multisubunit enzyme composed of 14 subunits. The complex is composed of a catalytic core of 3 subunits MT-CO1, MT-CO2 and MT-CO3, encoded in the mitochondrial DNA, and 11 supernumerary subunits COX4I, COX5A, COX5B, COX6A, COX6B, COX6C, COX7A, COX7B, COX7C, COX8 and NDUFA4, which are encoded in the nuclear genome. The complex exists as a monomer or a dimer and forms supercomplexes (SCs) in the inner mitochondrial membrane with NADH-ubiquinone oxidoreductase (complex I, CI) and ubiquinol-cytochrome c oxidoreductase (cytochrome b-c1 complex, complex III, CIII), resulting in different assemblies (supercomplex SCI(1)III(2)IV(1) and megacomplex MCI(2)III(2)IV(2)). Interacts with PHB2; the interaction decreases in absence of SPHK2. Interacts with AFG1L. Interacts with ABCB7; this interaction allows the regulation of cellular iron homeostasis and cellular reactive oxygen species (ROS) levels in cardiomyocytes. Interacts with FLVCR2; this interaction occurs in the absence of heme and is disrupted upon heme binding. Interacts with IRGC.

The protein localises to the mitochondrion inner membrane. Its pathway is energy metabolism; oxidative phosphorylation. In terms of biological role, component of the cytochrome c oxidase, the last enzyme in the mitochondrial electron transport chain which drives oxidative phosphorylation. The respiratory chain contains 3 multisubunit complexes succinate dehydrogenase (complex II, CII), ubiquinol-cytochrome c oxidoreductase (cytochrome b-c1 complex, complex III, CIII) and cytochrome c oxidase (complex IV, CIV), that cooperate to transfer electrons derived from NADH and succinate to molecular oxygen, creating an electrochemical gradient over the inner membrane that drives transmembrane transport and the ATP synthase. Cytochrome c oxidase is the component of the respiratory chain that catalyzes the reduction of oxygen to water. Electrons originating from reduced cytochrome c in the intermembrane space (IMS) are transferred via the dinuclear copper A center (CU(A)) of subunit 2 and heme A of subunit 1 to the active site in subunit 1, a binuclear center (BNC) formed by heme A3 and copper B (CU(B)). The BNC reduces molecular oxygen to 2 water molecules using 4 electrons from cytochrome c in the IMS and 4 protons from the mitochondrial matrix. This is Cytochrome c oxidase subunit 4 isoform 1, mitochondrial (COX4I1) from Mandrillus sphinx (Mandrill).